The sequence spans 112 residues: Nitrogen regulatory protein P-II (112 aa).

Tyr51 is subject to O-UMP-tyrosine.

Belongs to the P(II) protein family. Homotrimer.

In nitrogen-limiting conditions, when the ratio of Gln to 2-ketoglutarate decreases, P-II is uridylylated to P-II-UMP. P-II-UMP allows the deadenylation of glutamine synthetase (GS), thus activating the enzyme. Conversely, in nitrogen excess P-II is deuridylated and promotes the adenylation of GS. P-II indirectly controls the transcription of the GS gene (glnA). P-II prevents NR-II-catalyzed conversion of NR-I to NR-I-phosphate, the transcriptional activator of glnA. When P-II is uridylylated to P-II-UMP, these events are reversed. The polypeptide is Nitrogen regulatory protein P-II (glnB) (Bradyrhizobium diazoefficiens (strain JCM 10833 / BCRC 13528 / IAM 13628 / NBRC 14792 / USDA 110)).